Reading from the N-terminus, the 317-residue chain is Adenine deaminase (317 aa).

Zn(2+) is bound by residues His14, His16, and His194. The active-site Proton donor is Glu197. Asp275 is a Zn(2+) binding site. Asp276 is a binding site for substrate.

Belongs to the metallo-dependent hydrolases superfamily. Adenosine and AMP deaminases family. Adenine deaminase type 2 subfamily. It depends on Zn(2+) as a cofactor.

It catalyses the reaction adenine + H2O + H(+) = hypoxanthine + NH4(+). Catalyzes the hydrolytic deamination of adenine to hypoxanthine. Plays an important role in the purine salvage pathway and in nitrogen catabolism. The chain is Adenine deaminase from Pseudomonas syringae pv. tomato (strain ATCC BAA-871 / DC3000).